A 177-amino-acid polypeptide reads, in one-letter code: Nucleoside triphosphate/diphosphate phosphatase (177 aa).

Catalysis depends on Arg23, which acts as the Proton donor. Mg(2+)-binding residues include Asn87, Asp103, Asp105, Asp107, Asp120, and Glu123.

The protein belongs to the Ntdp family. Requires Mg(2+) as cofactor.

The enzyme catalyses a ribonucleoside 5'-triphosphate + H2O = a ribonucleoside 5'-diphosphate + phosphate + H(+). It carries out the reaction a ribonucleoside 5'-diphosphate + H2O = a ribonucleoside 5'-phosphate + phosphate + H(+). Has nucleoside phosphatase activity towards nucleoside triphosphates and nucleoside diphosphates. The sequence is that of Nucleoside triphosphate/diphosphate phosphatase from Streptococcus pneumoniae serotype 2 (strain D39 / NCTC 7466).